Consider the following 312-residue polypeptide: Transcriptional regulator protein Pur-beta (312 aa).

The segment at 1-32 (MADGDSGSERGGGGGPCGFQPASRGGGEQETQ) is disordered. Alanine 2 is modified (N-acetylalanine). Serine 6 and serine 8 each carry phosphoserine. Arginine 24 carries the omega-N-methylarginine modification. Residues 28–254 (EQETQELASK…LRVSEVKPSY (227 aa)) form a DNA-binding region. At threonine 31 the chain carries Phosphothreonine. Serine 101 carries the post-translational modification Phosphoserine. Arginine 152 is modified (omega-N-methylarginine). An N6-acetyllysine modification is found at lysine 267. Residues 284-295 (ERQRDKLYERRG) show a composition bias toward basic and acidic residues. Residues 284 to 312 (ERQRDKLYERRGGGSGGGEESEGEEVDED) form a disordered region. The residue at position 294 (arginine 294) is an Omega-N-methylarginine. 2 positions are modified to phosphoserine: serine 298 and serine 304. A compositionally biased stretch (acidic residues) spans 302-312 (EESEGEEVDED).

The protein belongs to the PUR DNA-binding protein family. In terms of assembly, homodimer, heterodimer with PURA and heterotrimer with PURA and YBX1/Y-box protein 1. Interacts with MYOCD and SRF. As to expression, expressed in myocardium of heart failure patients.

The protein localises to the nucleus. Its function is as follows. Transcriptional regulator which can act as an activator or a repressor. Represses the transcription of ACTA2 in fibroblasts and smooth muscle cells via its ability to interact with the purine-rich strand of a MCAT- containing element in the 5' flanking region of the gene. Represses the transcription of MYOCD, capable of repressing all isoforms of MYOCD but the magnitude of the repressive effects is most notable for the SMC- specific isoforms. Promotes hepatic glucose production by activating the transcription of ADCY6, leading to cAMP accumulation, increased PKA activity, CREB activation, and increased transcription of PCK1 and G6PC genes. Has capacity to bind repeated elements in single-stranded DNA such as the purine-rich single strand of the PUR element located upstream of the MYC gene. Participates in transcriptional and translational regulation of alpha-MHC expression in cardiac myocytes by binding to the purine-rich negative regulatory (PNR) element Modulates constitutive liver galectin-3 gene transcription by binding to its promoter. May play a role in the dendritic transport of a subset of mRNAs. The polypeptide is Transcriptional regulator protein Pur-beta (PURB) (Homo sapiens (Human)).